The sequence spans 205 residues: Peptidyl-tRNA hydrolase (205 aa).

Tyrosine 17 is a tRNA binding site. The Proton acceptor role is filled by histidine 22. Residues tyrosine 73 and asparagine 75 each coordinate tRNA.

The protein belongs to the PTH family. Monomer.

Its subcellular location is the cytoplasm. It carries out the reaction an N-acyl-L-alpha-aminoacyl-tRNA + H2O = an N-acyl-L-amino acid + a tRNA + H(+). Functionally, hydrolyzes ribosome-free peptidyl-tRNAs (with 1 or more amino acids incorporated), which drop off the ribosome during protein synthesis, or as a result of ribosome stalling. In terms of biological role, catalyzes the release of premature peptidyl moieties from peptidyl-tRNA molecules trapped in stalled 50S ribosomal subunits, and thus maintains levels of free tRNAs and 50S ribosomes. In Maridesulfovibrio salexigens (strain ATCC 14822 / DSM 2638 / NCIMB 8403 / VKM B-1763) (Desulfovibrio salexigens), this protein is Peptidyl-tRNA hydrolase.